The chain runs to 304 residues: tRNA pseudouridine synthase B (304 aa).

Asp-40 (nucleophile) is an active-site residue.

It belongs to the pseudouridine synthase TruB family. Type 1 subfamily.

It carries out the reaction uridine(55) in tRNA = pseudouridine(55) in tRNA. Functionally, responsible for synthesis of pseudouridine from uracil-55 in the psi GC loop of transfer RNAs. The sequence is that of tRNA pseudouridine synthase B from Halalkalibacterium halodurans (strain ATCC BAA-125 / DSM 18197 / FERM 7344 / JCM 9153 / C-125) (Bacillus halodurans).